A 174-amino-acid polypeptide reads, in one-letter code: Ribosome maturation factor RimP (174 aa).

This sequence belongs to the RimP family.

The protein resides in the cytoplasm. In terms of biological role, required for maturation of 30S ribosomal subunits. This Bdellovibrio bacteriovorus (strain ATCC 15356 / DSM 50701 / NCIMB 9529 / HD100) protein is Ribosome maturation factor RimP.